Consider the following 822-residue polypeptide: MWGWRGLLFWAVLVTATLCTARPAPTLPEQAQPWGVPVEVESLLVHPGDLLQLRCRLRDDVQSINWLRDGVQLAESNRTRITGEEVEVRDSIPADSGLYACVTNSPSGSDTTYFSVNVSDALPSSEDDDDDDDSSSEEKETDNTKPNRRPVAPYWTSPEKMEKKLHAVPAAKTVKFKCPSSGTPSPTLRWLKNGKEFKPDHRIGGYKVRYATWSIIMDSVVPSDKGNYTCIVENEYGSINHTYQLDVVERSPHRPILQAGLPANKTVALGSNVEFMCKVYSDPQPHIQWLKHIEVNGSKIGPDNLPYDQILKTAGVNTTDKEMEVLHLRNVSFEDAGEYTCLAGNSIGLSHHSAWLTVLEALEERPAVMTSPLYLEIIIYCTGAFLISCMVGSVIIYKMKSGTKKSDFHSQMAVHKLAKSIPLRRQVTVSADSSASMNSGVLLVRPSRLSSSGTPMLAGVSEYELPEDPRWELPRDRLVLGKPLGEGCFGQVVLAEAIGLDKDKPNRVTKVAVKMLKSDATEKDLSDLISEMEMMKMIGKHKNIINLLGACTQDGPLYVIVEYASKGNLREYLQARRPPGLEYCYNPSHNPEEQLSSKDLVSCAYQVARGMEYLASKKCIHRDLAARNVLVTEDNVMKIADFGLARDIHHIDYYKKTTNGRLPVKWMAPEALFDRIYTHQSDVWSFGVLLWEIFTLGGSPNPGVPVEELFKLLKEGHRMDKPSNCTNELYMMMRDCWNAVPSQRPTFKQLVEDLDRIVALTSNQEYLDLSMPLDQDSPSFPDTRSSTCSSGEDSVFSHEPFPEEPCLPRHPTQLANGGLNRR.

The N-terminal stretch at 1–21 is a signal peptide; it reads MWGWRGLLFWAVLVTATLCTA. Residues 22-376 lie on the Extracellular side of the membrane; sequence RPAPTLPEQA…AVMTSPLYLE (355 aa). An Ig-like C2-type 1 domain is found at 25-119; it reads PTLPEQAQPW…DTTYFSVNVS (95 aa). C55 and C101 are disulfide-bonded. N77 and N117 each carry an N-linked (GlcNAc...) asparagine glycan. Positions 120–162 are disordered; it reads DALPSSEDDDDDDDSSSEEKETDNTKPNRRPVAPYWTSPEKME. Residues 125–135 show a composition bias toward acidic residues; that stretch reads SEDDDDDDDSS. Residues 136 to 145 are compositionally biased toward basic and acidic residues; the sequence is SEEKETDNTK. Ig-like C2-type domains are found at residues 158-246 and 255-357; these read PEKM…YQLD and PILQ…AWLT. Positions 160 to 177 are heparin-binding; it reads KMEKKLHAVPAAKTVKFK. C178 and C230 are disulfide-bonded. N-linked (GlcNAc...) asparagine glycosylation is found at N227, N240, N264, N296, N317, and N330. An intrachain disulfide couples C277 to C341. A helical transmembrane segment spans residues 377 to 397; the sequence is IIIYCTGAFLISCMVGSVIIY. The Cytoplasmic portion of the chain corresponds to 398 to 822; it reads KMKSGTKKSD…QLANGGLNRR (425 aa). Y463 is modified (phosphotyrosine; by autocatalysis). In terms of domain architecture, Protein kinase spans 478–767; the sequence is LVLGKPLGEG…VALTSNQEYL (290 aa). ATP-binding positions include 484–490, K514, 562–564, and N568; these read LGEGCFG and EYA. A phosphotyrosine; by autocatalysis mark is found at Y583 and Y585. D623 acts as the Proton acceptor in catalysis. ATP-binding residues include R627 and D641. 4 positions are modified to phosphotyrosine; by autocatalysis: Y653, Y654, Y730, and Y766. The disordered stretch occupies residues 770–822; the sequence is SMPLDQDSPSFPDTRSSTCSSGEDSVFSHEPFPEEPCLPRHPTQLANGGLNRR. The segment covering 776-792 has biased composition (polar residues); sequence DSPSFPDTRSSTCSSGE.

This sequence belongs to the protein kinase superfamily. Tyr protein kinase family. Fibroblast growth factor receptor subfamily. In terms of assembly, monomer. Homodimer after ligand binding. Interacts predominantly with FGF1 and FGF2, but can also interact with FGF3, FGF4, FGF5, FGF6, FGF8, FGF10, FGF19, FGF21, FGF22 and FGF23 (in vitro). Ligand specificity is determined by tissue-specific expression of isoforms, and differences in the third Ig-like domain are crucial for ligand specificity. Affinity for fibroblast growth factors (FGFs) is increased by heparan sulfate glycosaminoglycans that function as coreceptors. Likewise, KLB increases the affinity for FGF19, FGF21 and FGF23. Interacts (phosphorylated on Tyr-766) with PLCG1 (via SH2 domains). Interacts with FRS2. Interacts (via C-terminus) with NEDD4 (via WW3 domain). Interacts with RPS6KA1. Interacts with KL. Interacts with SHB (via SH2 domain) and GRB10. Interacts with ANOS1; this interaction does not interfere with FGF2-binding to FGFR1, but prevents binding of heparin-bound FGF2. Interacts with SOX2 and SOX3. Interacts with FLRT1, FLRT2 and FLRT3. Found in a ternary complex with FGF1 and ITGAV:ITGB3. In terms of processing, autophosphorylated. Binding of FGF family members together with heparan sulfate proteoglycan or heparin promotes receptor dimerization and autophosphorylation on tyrosine residues. Autophosphorylation occurs in trans between the two FGFR molecules present in the dimer and proceeds in a highly ordered manner. Initial autophosphorylation at Tyr-653 increases the kinase activity by a factor of 50 to 100. After this, Tyr-583 becomes phosphorylated, followed by phosphorylation of Tyr-463, Tyr-766, Tyr-583 and Tyr-585. In a third stage, Tyr-654 is autophosphorylated, resulting in a further tenfold increase of kinase activity. Phosphotyrosine residues provide docking sites for interacting proteins and so are crucial for FGFR1 function and its regulation. Post-translationally, ubiquitinated. FGFR1 is rapidly ubiquitinated by NEDD4 after autophosphorylation, leading to internalization and lysosomal degradation. CBL is recruited to activated FGFR1 via FRS2 and GRB2, and mediates ubiquitination and subsequent degradation of FGFR1. N-glycosylated in the endoplasmic reticulum. The N-glycan chains undergo further maturation to an Endo H-resistant form in the Golgi apparatus. As to expression, expressed in the parathyroid.

It localises to the cell membrane. The protein resides in the nucleus. It is found in the cytoplasm. Its subcellular location is the cytosol. The protein localises to the cytoplasmic vesicle. The enzyme catalyses L-tyrosyl-[protein] + ATP = O-phospho-L-tyrosyl-[protein] + ADP + H(+). Its activity is regulated as follows. Present in an inactive conformation in the absence of bound ligand. Ligand binding leads to dimerization and activation by sequential autophosphorylation on tyrosine residues. Its function is as follows. Tyrosine-protein kinase that acts as a cell-surface receptor for fibroblast growth factors and plays an essential role in the regulation of embryonic development, cell proliferation, differentiation and migration. Required for normal mesoderm patterning and correct axial organization during embryonic development, normal skeletogenesis and normal development of the gonadotropin-releasing hormone (GnRH) neuronal system. Phosphorylates PLCG1, FRS2, GAB1 and SHB. Ligand binding leads to the activation of several signaling cascades. Activation of PLCG1 leads to the production of the cellular signaling molecules diacylglycerol and inositol 1,4,5-trisphosphate. Phosphorylation of FRS2 triggers recruitment of GRB2, GAB1, PIK3R1 and SOS1, and mediates activation of RAS, MAPK1/ERK2, MAPK3/ERK1 and the MAP kinase signaling pathway, as well as of the AKT1 signaling pathway. Promotes phosphorylation of SHC1, STAT1 and PTPN11/SHP2. In the nucleus, enhances RPS6KA1 and CREB1 activity and contributes to the regulation of transcription. FGFR1 signaling is down-regulated by IL17RD/SEF, and by FGFR1 ubiquitination, internalization and degradation. This Rattus norvegicus (Rat) protein is Fibroblast growth factor receptor 1 (Fgfr1).